The chain runs to 1310 residues: Angiotensin-converting enzyme (1310 aa).

The N-terminal stretch at 1–33 is a signal peptide; it reads MGAAPGRRGPRLLRPPPPLLLLLLLLRPPPAAL. Topologically, residues 34-1260 are extracellular; the sequence is TLDPGLLPGD…GMNLDAQQAR (1227 aa). 2 Peptidase M2 domains span residues 45–628 and 647–1226; these read AADE…LGWP and VTDE…LGWP. Asparagine 59, asparagine 79, and asparagine 151 each carry an N-linked (GlcNAc...) asparagine glycan. A disulfide bond links cysteine 162 and cysteine 170. Residue tyrosine 236 coordinates chloride. Asparagine 323 carries an N-linked (GlcNAc...) asparagine glycan. A disulfide bridge links cysteine 364 with cysteine 382. Histidine 395 provides a ligand contact to Zn(2+). Glutamate 396 (proton acceptor 1) is an active-site residue. Zn(2+) contacts are provided by histidine 399 and glutamate 422. Asparagine 449 and asparagine 513 each carry an N-linked (GlcNAc...) asparagine glycan. The Proton donor 1 role is filled by histidine 524. Arginine 533 is a binding site for chloride. Cysteine 549 and cysteine 561 are joined by a disulfide. Residues asparagine 681, asparagine 699, and asparagine 718 are each glycosylated (N-linked (GlcNAc...) asparagine). The cysteines at positions 761 and 767 are disulfide-linked. The chloride site is built by arginine 795 and tyrosine 833. Asparagine 946 carries N-linked (GlcNAc...) asparagine glycosylation. A disulfide bridge links cysteine 961 with cysteine 979. Histidine 992 lines the Zn(2+) pocket. The active-site Proton acceptor 2 is the glutamate 993. Zn(2+) contacts are provided by histidine 996 and glutamate 1020. 2 residues coordinate chloride: tryptophan 1094 and arginine 1098. The Proton donor 2 role is filled by histidine 1122. A chloride-binding site is contributed by arginine 1131. An intrachain disulfide couples cysteine 1147 to cysteine 1159. Residue asparagine 1195 is glycosylated (N-linked (GlcNAc...) asparagine). The juxtamembrane stalk stretch occupies residues 1219-1260; sequence HGEKLGWPQYTWTPNSARSEGSLPDSGRVNFLGMNLDAQQAR. Residues 1261 to 1281 form a helical membrane-spanning segment; the sequence is VGQWVLLFLGVALLLASLGLT. Over 1282 to 1310 the chain is Cytoplasmic; the sequence is QRLFSIRYQSLRQPHHGPQFGSEVELRHS. Residue serine 1303 is modified to Phosphoserine.

The protein belongs to the peptidase M2 family. Monomer and homodimer; homodimerizes following binding to an inhibitor. Interacts with calmodulin (CALM1, CALM2 or CALM3); interaction takes place in the cytoplasmic region and regulates phosphorylation and proteolytic cleavage. Zn(2+) is required as a cofactor. It depends on chloride as a cofactor. N-glycosylated. In terms of processing, phosphorylated by CK2 on Ser-1303; which allows membrane retention. Phosphorylated on tyrosine residues on its extracellular part, promoting cleavage by secretase enzymes and formation of the soluble form (Angiotensin-converting enzyme, soluble form). Post-translationally, produced following proteolytic cleavage by secretase enzymes that cleave the transmembrane form in the juxtamembrane stalk region upstream of the transmembrane region. Cleavage can take place at different sites of the juxtamembrane stalk region. As to expression, testis-specific isoform is expressed in spermatocytes, adult testis.

It is found in the cell membrane. The protein resides in the cytoplasm. Its subcellular location is the secreted. The catalysed reaction is Release of a C-terminal dipeptide, oligopeptide-|-Xaa-Yaa, when Xaa is not Pro, and Yaa is neither Asp nor Glu. Thus, conversion of angiotensin I to angiotensin II, with increase in vasoconstrictor activity, but no action on angiotensin II.. It carries out the reaction angiotensin I + H2O = L-histidyl-L-leucine + angiotensin II. The enzyme catalyses bradykinin + H2O = L-Phe-L-Arg + bradykinin(1-7). It catalyses the reaction substance P + H2O = substance P(1-9) + L-Leu-L-Met-NH2. The catalysed reaction is substance P + H2O = substance P(1-8) + Gly-L-Leu-L-Met-NH2. It carries out the reaction substance P + H2O = L-Phe-L-Phe-Gly-L-Leu-L-Met-NH2 + substance P(1-6). The enzyme catalyses neurotensin + H2O = neurotensin(1-11) + L-isoleucyl-L-leucine. It catalyses the reaction goralatide + H2O = N-acetyl-L-seryl-L-aspartate + L-lysyl-L-proline. The catalysed reaction is Met-enkephalin + H2O = L-phenylalanyl-L-methionine + L-tyrosylglycylglycine. It carries out the reaction Leu-enkephalin + H2O = L-tyrosylglycylglycine + L-phenylalanyl-L-leucine. The enzyme catalyses Met-enkephalin-Arg-Phe + H2O = L-arginyl-L-phenylalanine + Met-enkephalin. The dipeptidyl carboxypeptidase activity is strongly activated by chloride. Specifically inhibited by lisinopril. Inhibited by mixanpril, an orally-active drug used for the treatment of hypertension. With respect to regulation, strongly inhibited by lisinopril and captopril. Its function is as follows. Dipeptidyl carboxypeptidase that removes dipeptides from the C-terminus of a variety of circulating hormones, such as angiotensin I, bradykinin or enkephalins, thereby playing a key role in the regulation of blood pressure, electrolyte homeostasis or synaptic plasticity. Composed of two similar catalytic domains, each possessing a functional active site, with different selectivity for substrates. Plays a major role in the angiotensin-renin system that regulates blood pressure and sodium retention by the kidney by converting angiotensin I to angiotensin II, resulting in an increase of the vasoconstrictor activity of angiotensin. Also able to inactivate bradykinin, a potent vasodilator, and therefore enhance the blood pressure response. Acts as a regulator of synaptic transmission by mediating cleavage of neuropeptide hormones, such as substance P, neurotensin or enkephalins. Catalyzes degradation of different enkephalin neuropeptides (Met-enkephalin, Leu-enkephalin, Met-enkephalin-Arg-Phe and possibly Met-enkephalin-Arg-Gly-Leu). Acts as a regulator of synaptic plasticity in the nucleus accumbens of the brain by mediating cleavage of Met-enkephalin-Arg-Phe, a strong ligand of Mu-type opioid receptor OPRM1, into Met-enkephalin. Met-enkephalin-Arg-Phe cleavage by ACE decreases activation of OPRM1, leading to long-term synaptic potentiation of glutamate release. Also acts as a regulator of hematopoietic stem cell differentiation by mediating degradation of hemoregulatory peptide N-acetyl-SDKP (AcSDKP). Acts as a regulator of cannabinoid signaling pathway by mediating degradation of hemopressin, an antagonist peptide of the cannabinoid receptor CNR1. Involved in amyloid-beta metabolism by catalyzing degradation of Amyloid-beta protein 40 and Amyloid-beta protein 42 peptides, thereby preventing plaque formation. Catalyzes cleavage of cholecystokinin (maturation of Cholecystokinin-8 and Cholecystokinin-5) and Gonadoliberin-1 (both maturation and degradation) hormones. Degradation of hemoregulatory peptide N-acetyl-SDKP (AcSDKP) and amyloid-beta proteins is mediated by the N-terminal catalytic domain, while angiotensin I and cholecystokinin cleavage is mediated by the C-terminal catalytic region. Functionally, soluble form that is released in blood plasma and other body fluids following proteolytic cleavage in the juxtamembrane stalk region. In terms of biological role, isoform produced by alternative promoter usage that is specifically expressed in spermatocytes and adult testis, and which is required for male fertility. In contrast to somatic isoforms, only contains one catalytic domain. Acts as a dipeptidyl carboxypeptidase that removes dipeptides from the C-terminus of substrates. The identity of substrates that are needed for male fertility is unknown. May also have a glycosidase activity which releases GPI-anchored proteins from the membrane by cleaving the mannose linkage in the GPI moiety. The GPIase activity was reported to be essential for the egg-binding ability of the sperm. This activity is however unclear and has been challenged by other groups, suggesting that it may be indirect. The polypeptide is Angiotensin-converting enzyme (Oryctolagus cuniculus (Rabbit)).